A 553-amino-acid chain; its full sequence is Zinc finger protein Elbow (553 aa).

2 disordered regions span residues 59–243 and 388–407; these read STKQ…MHSP and GGGG…SGGS. Low complexity-rich tracts occupy residues 96–110 and 121–134; these read SPVS…TGSV and SSSS…TFKP. Polar residues-rich tracts occupy residues 137 to 146, 153 to 173, and 224 to 236; these read PNNNISNITT, TNLS…KSMT, and TAST…NSKE. The self-association stretch occupies residues 287–480; that stretch reads SASAAAAAAS…PDAVLSAAAA (194 aa). Residues 287 to 553 are interaction with noc; that stretch reads SASAAAAAAS…YGPRMGSSHP (267 aa). Gly residues predominate over residues 388 to 406; it reads GGGGGGSSKSSGSQGGSGG. The C2H2-type zinc-finger motif lies at 437–466; that stretch reads YVCSWIGSDAAYCGKRFGTSDDLFQHLRTH.

This sequence belongs to the Elbow/Noc family. As to quaternary structure, self-associates. Interacts with gro and noc.

May negatively regulate Notch-induced cell proliferation in the eye-head primordium. May act in leg and wing primordia to negatively regulate body-wall specifying genes and thereby promote appendage formation. Required for tracheal development. The polypeptide is Zinc finger protein Elbow (elB) (Drosophila melanogaster (Fruit fly)).